Here is a 554-residue protein sequence, read N- to C-terminus: Arginine--tRNA ligase (554 aa).

Positions 132-142 match the 'HIGH' region motif; that stretch reads ANPTGPIHLGG.

It belongs to the class-I aminoacyl-tRNA synthetase family. In terms of assembly, monomer.

It localises to the cytoplasm. The catalysed reaction is tRNA(Arg) + L-arginine + ATP = L-arginyl-tRNA(Arg) + AMP + diphosphate. In Clavibacter sepedonicus (Clavibacter michiganensis subsp. sepedonicus), this protein is Arginine--tRNA ligase.